We begin with the raw amino-acid sequence, 340 residues long: Arginase 1, mitochondrial (340 aa).

Residues 1-24 constitute a mitochondrion transit peptide; sequence MGGVAAGTRWIHHVRRLSAAKVSA. Mn(2+) is bound by residues His-159, Asp-183, His-185, and Asp-187. Residues 185-189 and 193-195 each bind substrate; these read HPDIY and EGN. The Mn(2+) site is built by Asp-268 and Asp-270. Glu-311 contacts substrate.

This sequence belongs to the arginase family. It depends on Mn(2+) as a cofactor.

It is found in the mitochondrion. The catalysed reaction is L-arginine + H2O = urea + L-ornithine. It functions in the pathway nitrogen metabolism; urea cycle; L-ornithine and urea from L-arginine: step 1/1. Catalyzes the hydrolysis of L-arginine to urea and L-ornithine. The latter can be utilized in the urea cycle or as a precursor for the synthesis of both polyamines and proline. This Oryza sativa subsp. japonica (Rice) protein is Arginase 1, mitochondrial (ARG1).